Consider the following 189-residue polypeptide: Transcription factor FapR (189 aa).

Belongs to the FapR family.

Transcriptional factor involved in regulation of membrane lipid biosynthesis by repressing genes involved in fatty acid and phospholipid metabolism. This is Transcription factor FapR from Listeria innocua serovar 6a (strain ATCC BAA-680 / CLIP 11262).